The chain runs to 93 residues: Ferredoxin-2 (93 aa).

A 2Fe-2S ferredoxin-type domain is found at tyrosine 2–aspartate 91. [2Fe-2S] cluster contacts are provided by cysteine 37, cysteine 42, cysteine 45, and cysteine 75.

This sequence belongs to the 2Fe2S plant-type ferredoxin family. [2Fe-2S] cluster serves as cofactor.

Its subcellular location is the plastid. It localises to the chloroplast. In terms of biological role, ferredoxins are iron-sulfur proteins that transfer electrons in a wide variety of metabolic reactions. The sequence is that of Ferredoxin-2 from Equisetum arvense (Field horsetail).